Reading from the N-terminus, the 263-residue chain is MKVESVTFLTLLGIGCVLSCCTIPSRPINMKFKNSVETDANANYNIGDTIEYLCLPGYRKQKMGPIYAKCTGTGWTLFNQCIKRRCPSPRDIDNGQLDIGGVDFGSSITYSCNSGYHLIGESKSYCELGSTGSMVWNPEAPICESVKCQSPPSISNGRHNGYEDFYTDGSVVTYSCNSGYSLIGNSGVLCSGGEWSDPPTCQIVKCPHPTISNGYLSSGFKRSYSYNDNVDFKCKYGYKLSGSSSSTCSPGNTWKPELPKCVR.

A signal peptide spans methionine 1–serine 19. Sushi domains lie at cysteine 20–lysine 83, arginine 84–serine 145, valine 146–isoleucine 203, and valine 204–arginine 263. 8 disulfides stabilise this stretch: cysteine 21/cysteine 70, cysteine 54/cysteine 81, cysteine 86/cysteine 126, cysteine 112/cysteine 143, cysteine 148/cysteine 190, cysteine 176/cysteine 201, cysteine 206/cysteine 248, and cysteine 234/cysteine 261.

The protein belongs to the receptors of complement activation (RCA) family. As to quaternary structure, heterodimer with A56 protein; disulfide-linked.

It localises to the virion membrane. The protein resides in the host cell membrane. It is found in the secreted. Serves to protect the virus against complement attack by inhibiting both classical and alternative pathways of complement activation. Binds C3b and C4b. The protein is Complement control protein C3 of Vaccinia virus (strain Copenhagen) (VACV).